A 388-amino-acid polypeptide reads, in one-letter code: Processive diacylglycerol beta-glucosyltransferase (388 aa).

It belongs to the glycosyltransferase 28 family. UgtP subfamily.

It is found in the cell membrane. It catalyses the reaction a 1,2-diacyl-3-O-(beta-D-glucopyranosyl)-sn-glycerol + UDP-alpha-D-glucose = a 1,2-diacyl-3-O-(beta-D-Glc-(1-&gt;6)-beta-D-Glc)-sn-glycerol + UDP + H(+). The catalysed reaction is a 1,2-diacyl-3-O-(beta-D-Glc-(1-&gt;6)-beta-D-Glc)-sn-glycerol + UDP-alpha-D-glucose = a 1,2-diacyl-3-O-(beta-D-Glc-(1-&gt;6)-beta-D-Glc-(1-&gt;6)-beta-D-Glc)-sn-glycerol + UDP + H(+). The enzyme catalyses a 1,2-diacyl-sn-glycerol + UDP-alpha-D-glucose = a 1,2-diacyl-3-O-(beta-D-glucopyranosyl)-sn-glycerol + UDP + H(+). The protein operates within glycolipid metabolism; diglucosyl-diacylglycerol biosynthesis. Functionally, processive glucosyltransferase involved in the biosynthesis of both the bilayer- and non-bilayer-forming membrane glucolipids. Is able to successively transfer up to three glucosyl residues to diacylglycerol (DAG), thereby catalyzing the formation of beta-monoglucosyl-DAG (3-O-(beta-D-glucopyranosyl)-1,2-diacyl-sn-glycerol), beta-diglucosyl-DAG (3-O-(beta-D-glucopyranosyl-beta-(1-&gt;6)-D-glucopyranosyl)-1,2-diacyl-sn-glycerol) and beta-triglucosyl-DAG (3-O-(beta-D-glucopyranosyl-beta-(1-&gt;6)-D-glucopyranosyl-beta-(1-&gt;6)-D-glucopyranosyl)-1,2-diacyl-sn-glycerol). Beta-diglucosyl-DAG is the predominant glycolipid found in Bacillales and is also used as a membrane anchor for lipoteichoic acid (LTA). This Bacillus thuringiensis (strain Al Hakam) protein is Processive diacylglycerol beta-glucosyltransferase.